The following is a 381-amino-acid chain: Queuine tRNA-ribosyltransferase (381 aa).

Residue Asp-96 is the Proton acceptor of the active site. Substrate-binding positions include 96–100, Asp-150, Gln-193, and Gly-220; that span reads DSGGF. Residues 251-257 are RNA binding; it reads GVGSPDA. Residue Asp-270 is the Nucleophile of the active site. Positions 275–279 are RNA binding; important for wobble base 34 recognition; sequence TRIAR. Positions 308, 310, 313, and 339 each coordinate Zn(2+).

Belongs to the queuine tRNA-ribosyltransferase family. As to quaternary structure, homodimer. Within each dimer, one monomer is responsible for RNA recognition and catalysis, while the other monomer binds to the replacement base PreQ1. Zn(2+) is required as a cofactor.

It catalyses the reaction 7-aminomethyl-7-carbaguanine + guanosine(34) in tRNA = 7-aminomethyl-7-carbaguanosine(34) in tRNA + guanine. Its pathway is tRNA modification; tRNA-queuosine biosynthesis. Catalyzes the base-exchange of a guanine (G) residue with the queuine precursor 7-aminomethyl-7-deazaguanine (PreQ1) at position 34 (anticodon wobble position) in tRNAs with GU(N) anticodons (tRNA-Asp, -Asn, -His and -Tyr). Catalysis occurs through a double-displacement mechanism. The nucleophile active site attacks the C1' of nucleotide 34 to detach the guanine base from the RNA, forming a covalent enzyme-RNA intermediate. The proton acceptor active site deprotonates the incoming PreQ1, allowing a nucleophilic attack on the C1' of the ribose to form the product. After dissociation, two additional enzymatic reactions on the tRNA convert PreQ1 to queuine (Q), resulting in the hypermodified nucleoside queuosine (7-(((4,5-cis-dihydroxy-2-cyclopenten-1-yl)amino)methyl)-7-deazaguanosine). This Bacillus subtilis (strain 168) protein is Queuine tRNA-ribosyltransferase.